Here is a 35-residue protein sequence, read N- to C-terminus: Photosystem II reaction center protein M (35 aa).

The chain crosses the membrane as a helical span at residues 5–25 (ILAFIATALFIIIPTAFLLIL).

It belongs to the PsbM family. PSII is composed of 1 copy each of membrane proteins PsbA, PsbB, PsbC, PsbD, PsbE, PsbF, PsbH, PsbI, PsbJ, PsbK, PsbL, PsbM, PsbT, PsbX, PsbY, PsbZ, Psb30/Ycf12, at least 3 peripheral proteins of the oxygen-evolving complex and a large number of cofactors. It forms dimeric complexes.

It localises to the plastid. The protein resides in the chloroplast thylakoid membrane. One of the components of the core complex of photosystem II (PSII). PSII is a light-driven water:plastoquinone oxidoreductase that uses light energy to abstract electrons from H(2)O, generating O(2) and a proton gradient subsequently used for ATP formation. It consists of a core antenna complex that captures photons, and an electron transfer chain that converts photonic excitation into a charge separation. This subunit is found at the monomer-monomer interface. The chain is Photosystem II reaction center protein M from Chara vulgaris (Common stonewort).